Here is a 419-residue protein sequence, read N- to C-terminus: MPLSDFVLALKDNPYFGAGFGLVGVGTALALARKGAQLGLVAFRRHYMITLEVPARDRSYAWLLSWLTRHSTRTQHLSVETTYLQHESGRISTKFEFVPSPGNHFIWYQGKWIRVERSREMQMIDLQTGTPWESVTFTALGTDRKVFFNILEEARELALQQEEGKTVMYTAVGSEWRPFGYPRRRRPLNSVVLEQGVTERIVRDIREFIDNPKWYIDRGIPYRRGYLLYGPPGCGKSSFITALAGELQHSICLLSLTDSSLSDDRLNHLLSVAPQQSLVLLEDVDAAFLSRDLAAENPIKYQGLGRLTFSGLLNALDGVASTEARIVFMTTNHIDRLDPALIRPGRVDMKEYVGHCSRWQLTQMFQRFYPGQATSLAENFADRVLQATTQISPAQVQGYFMLYKNDPAGAIQNAESLRR.

At 1–15 the chain is on the mitochondrial intermembrane side; it reads MPLSDFVLALKDNPY. A helical transmembrane segment spans residues 16–32; sequence FGAGFGLVGVGTALALA. Topologically, residues 33 to 419 are mitochondrial matrix; the sequence is RKGAQLGLVA…AIQNAESLRR (387 aa). Position 181 is a phosphotyrosine (Tyr-181). ATP is bound at residue 230–237; that stretch reads GPPGCGKS.

The protein belongs to the AAA ATPase family. BCS1 subfamily. As to quaternary structure, interacts with LETM1.

Its subcellular location is the mitochondrion inner membrane. The catalysed reaction is ATP + H2O = ADP + phosphate + H(+). Functionally, chaperone necessary for the incorporation of Rieske iron-sulfur protein UQCRFS1 into the mitochondrial respiratory chain complex III. Plays an important role in the maintenance of mitochondrial tubular networks, respiratory chain assembly and formation of the LETM1 complex. The polypeptide is Mitochondrial chaperone BCS1 (BCS1L) (Bos taurus (Bovine)).